A 221-amino-acid chain; its full sequence is Deoxyribose-phosphate aldolase (221 aa).

Residue aspartate 89 is the Proton donor/acceptor of the active site. The Schiff-base intermediate with acetaldehyde role is filled by lysine 151. Lysine 180 acts as the Proton donor/acceptor in catalysis.

This sequence belongs to the DeoC/FbaB aldolase family. DeoC type 1 subfamily.

The protein localises to the cytoplasm. It catalyses the reaction 2-deoxy-D-ribose 5-phosphate = D-glyceraldehyde 3-phosphate + acetaldehyde. It functions in the pathway carbohydrate degradation; 2-deoxy-D-ribose 1-phosphate degradation; D-glyceraldehyde 3-phosphate and acetaldehyde from 2-deoxy-alpha-D-ribose 1-phosphate: step 2/2. Functionally, catalyzes a reversible aldol reaction between acetaldehyde and D-glyceraldehyde 3-phosphate to generate 2-deoxy-D-ribose 5-phosphate. The polypeptide is Deoxyribose-phosphate aldolase (Brevibacillus brevis (strain 47 / JCM 6285 / NBRC 100599)).